The following is a 668-amino-acid chain: Packaging protein UL32 homolog (668 aa).

The segment covering 1–10 (MNPSTHVSSN) has biased composition (polar residues). Residues 1–35 (MNPSTHVSSNGPTTPPHGPHTTFLPPTSPAPSTSS) form a disordered region. Residues 19-35 (PHTTFLPPTSPAPSTSS) are compositionally biased toward low complexity. Cys-200, Cys-203, His-276, and Cys-282 together coordinate Zn(2+). The tract at residues 200–282 (CNLCAIISIC…FHLHFFINRC (83 aa)) is zinc finger 1. The tract at residues 401–430 (IEEEEDEEGGEKGGDDPGRHNGGGTSGGFS) is disordered. Over residues 410 to 419 (GEKGGDDPGR) the composition is skewed to basic and acidic residues. Zn(2+)-binding residues include Cys-459, Cys-462, His-567, and Cys-574. The tract at residues 459–574 (CLLCELMACS…YKHFFCDPQC (116 aa)) is zinc finger 2.

It belongs to the herpesviridae UL32 protein family.

It localises to the host cytoplasm. It is found in the host nucleus. Plays a role in efficient localization of neo-synthesized capsids to nuclear replication compartments, thereby controlling cleavage and packaging of virus genomic DNA. This Homo sapiens (Human) protein is Packaging protein UL32 homolog (UL52).